Reading from the N-terminus, the 642-residue chain is Transmembrane 9 superfamily member 4 (642 aa).

The N-terminal stretch at 1–23 (MATAMDWLPWSLLLFSLMCETSA) is a signal peptide. At 24–281 (FYVPGVAPIN…TMSDVQIHWF (258 aa)) the chain is on the extracellular side. A helical transmembrane segment spans residues 282 to 302 (SIINSVVVVFFLSGILSMIII). The Cytoplasmic portion of the chain corresponds to 303 to 346 (RTLRKDIANYNKEDDIEDTMEESGWKLVHGDVFRPPQYPMILSS). Y312 carries the post-translational modification Phosphotyrosine. Residues 347–367 (LLGSGIQLFCMILIVIFVAML) form a helical membrane-spanning segment. The Extracellular portion of the chain corresponds to 368–376 (GMLSPSSRG). Residues 377–397 (ALMTTACFLFMFMGVFGGFSA) traverse the membrane as a helical segment. Over 398–416 (GRLYRTLKGHRWKKGAFCT) the chain is Cytoplasmic. Residues 417-437 (ATLYPGVVFGICFVLNCFIWG) traverse the membrane as a helical segment. The Extracellular portion of the chain corresponds to 438 to 449 (KHSSGAVPFPTM). Residues 450–470 (VALLCMWFGISLPLVYLGYYF) traverse the membrane as a helical segment. Residues 471–501 (GFRKQPYDNPVRTNQIPRQIPEQRWYMNRFV) lie on the Cytoplasmic side of the membrane. A helical transmembrane segment spans residues 502 to 522 (GILMAGILPFGAMFIELFFIF). The Extracellular portion of the chain corresponds to 523–535 (SAIWENQFYYLFG). Residues 536–556 (FLFLVFIILVVSCSQISIVMV) traverse the membrane as a helical segment. Residues 557–570 (YFQLCAEDYRWWWR) are Cytoplasmic-facing. A helical transmembrane segment spans residues 571–591 (NFLVSGGSAFYVLVYAIFYFV). Residues 592–598 (NKLDIVE) lie on the Extracellular side of the membrane. The helical transmembrane segment at 599 to 619 (FIPSLLYFGYTALMVLSFWLL) threads the bilayer. The Cytoplasmic segment spans residues 620–642 (TGTIGFYAAYMFVRKIYAAVKID).

It belongs to the nonaspanin (TM9SF) (TC 9.A.2) family. As to quaternary structure, interacts with ATP6V1H in colon cancer cells. As to expression, highly expressed in metastatic melanoma cells whereas it is undetectable in primary melanoma cells, healthy skin tissues and peripheral blood lymphocytes. Expressed in CD34(+) hematopoietic progenitor cells and during monocyte and granulocyte differentiation. Overexpressed in acute myeloid leukemia, in particular in those displaying granulocytic differentiation (at protein level).

The protein resides in the membrane. It is found in the golgi apparatus. Its subcellular location is the early endosome. Functionally, associates with proteins harboring glycine-rich transmembrane domains and ensures their efficient localization to the cell surface. Regulates the assembly and activity of V-ATPase in colon cancer cells via its interaction with V-type proton ATPase subunit H (ATP6V1H) and contributes to V-ATPase-mediated pH alterations in cancer cells which play an important role in drug resistance and invasiveness of colon cancer cells. Plays an important role in an atypical phagocytic activity of metastatic melanoma cells called cannibalism and is involved in the pH regulation of the intracellular vesicles in tumor cells. This is Transmembrane 9 superfamily member 4 (TM9SF4) from Homo sapiens (Human).